Consider the following 526-residue polypeptide: Peptide chain release factor 3 (526 aa).

The tr-type G domain occupies Gly-8–Gln-277. GTP is bound by residues Ser-17–Thr-24, Asp-85–His-89, and Asn-139–Asp-142.

It belongs to the TRAFAC class translation factor GTPase superfamily. Classic translation factor GTPase family. PrfC subfamily.

The protein resides in the cytoplasm. In terms of biological role, increases the formation of ribosomal termination complexes and stimulates activities of RF-1 and RF-2. It binds guanine nucleotides and has strong preference for UGA stop codons. It may interact directly with the ribosome. The stimulation of RF-1 and RF-2 is significantly reduced by GTP and GDP, but not by GMP. The sequence is that of Peptide chain release factor 3 from Aliivibrio fischeri (strain ATCC 700601 / ES114) (Vibrio fischeri).